A 266-amino-acid polypeptide reads, in one-letter code: Proline-rich protein 23A (266 aa).

Residues Met1–Gln18 show a composition bias toward low complexity. Disordered regions lie at residues Met1–Asp47 and Glu197–Glu266. Over residues Pro227–Pro238 the composition is skewed to pro residues. The segment covering Pro255–Glu266 has biased composition (basic residues).

The protein belongs to the PRR23 family.

In Homo sapiens (Human), this protein is Proline-rich protein 23A (PRR23A).